We begin with the raw amino-acid sequence, 499 residues long: Putative ribose/galactose/methyl galactoside import ATP-binding protein 3 (499 aa).

ABC transporter domains are found at residues 8–243 (LRMR…VGRE) and 253–497 (SKIG…TGEE). ATP is bound at residue 40–47 (GENGAGKS).

This sequence belongs to the ABC transporter superfamily. Carbohydrate importer 2 (CUT2) (TC 3.A.1.2) family.

It is found in the cell inner membrane. The enzyme catalyses D-ribose(out) + ATP + H2O = D-ribose(in) + ADP + phosphate + H(+). It carries out the reaction D-galactose(out) + ATP + H2O = D-galactose(in) + ADP + phosphate + H(+). Functionally, part of an ABC transporter complex involved in carbohydrate import. Could be involved in ribose, galactose and/or methyl galactoside import. Responsible for energy coupling to the transport system. The polypeptide is Putative ribose/galactose/methyl galactoside import ATP-binding protein 3 (Agrobacterium fabrum (strain C58 / ATCC 33970) (Agrobacterium tumefaciens (strain C58))).